Here is a 201-residue protein sequence, read N- to C-terminus: MAEKFIKHTGLVVPLDAANVDTDAIIPKQFLQKVTRTGFGAHLFNDWRFLDEKGQQPNPDFVLNFPQYQGASILLARENFGCGSSREHAPWALTDYGFKVVIAPSFADIFYGNSFNNQLLPVKLSDAEVDELFALVKANPGIHFDVDLEAQEVKAGEKTYRFTIDAFRRHCMMNGLDSIGLTLQHDDAIAAYEAKQPAFMN.

This sequence belongs to the LeuD family. LeuD type 1 subfamily. As to quaternary structure, heterodimer of LeuC and LeuD.

The catalysed reaction is (2R,3S)-3-isopropylmalate = (2S)-2-isopropylmalate. It participates in amino-acid biosynthesis; L-leucine biosynthesis; L-leucine from 3-methyl-2-oxobutanoate: step 2/4. In terms of biological role, catalyzes the isomerization between 2-isopropylmalate and 3-isopropylmalate, via the formation of 2-isopropylmaleate. This Shigella boydii serotype 18 (strain CDC 3083-94 / BS512) protein is 3-isopropylmalate dehydratase small subunit.